The chain runs to 514 residues: Cytoplasmic tRNA 2-thiolation protein 2 (514 aa).

Disordered regions lie at residues 1–23 and 192–222; these read MCQA…PRPS and VLGA…TAGY. An N-acetylcysteine modification is found at Cys-2. Basic and acidic residues-rich tracts occupy residues 12–23 and 206–215; these read ARREPPPVPRPS and ARLHPSHGRE. A phosphoserine mark is found at Ser-421 and Ser-425.

It belongs to the CTU2/NCS2 family. As to quaternary structure, component of a complex at least composed of URM1, CTU2/NCS2 and CTU1/ATPBD3.

Its subcellular location is the cytoplasm. It functions in the pathway tRNA modification; 5-methoxycarbonylmethyl-2-thiouridine-tRNA biosynthesis. Its function is as follows. Plays a central role in 2-thiolation of mcm(5)S(2)U at tRNA wobble positions of tRNA(Lys), tRNA(Glu) and tRNA(Gln). May act by forming a heterodimer with CTU1/ATPBD3 that ligates sulfur from thiocarboxylated URM1 onto the uridine of tRNAs at wobble position. The chain is Cytoplasmic tRNA 2-thiolation protein 2 (Ctu2) from Mus musculus (Mouse).